Here is a 63-residue protein sequence, read N- to C-terminus: Small ribosomal subunit protein eS31 (63 aa).

Zn(2+)-binding residues include C31, C34, C50, and C53. The segment at 31–53 (CPRCGSIMAHHMKPVERWACGKC) adopts a C4-type zinc-finger fold.

This sequence belongs to the eukaryotic ribosomal protein eS31 family. As to quaternary structure, part of the 30S ribosomal subunit. The cofactor is Zn(2+).

In Sulfurisphaera tokodaii (strain DSM 16993 / JCM 10545 / NBRC 100140 / 7) (Sulfolobus tokodaii), this protein is Small ribosomal subunit protein eS31.